The chain runs to 204 residues: Glideosome-associated protein 45 (204 aa).

The disordered stretch occupies residues methionine 1–glutamate 86. Glycine 2 is lipidated: N-myristoyl glycine. The tract at residues glycine 2–lysine 29 is targets GAP45 to the cell membrane; however, dispensable for the formation of the glideosome complex and the association with the inner membrane complex. Basic and acidic residues predominate over residues lysine 9–proline 53. The segment covering leucine 54–glutamate 73 has biased composition (acidic residues). Serine 89 is modified (phosphoserine; by CPK10). Serine 103 carries the post-translational modification Phosphoserine; by CPK10 and PKB. Serine 149 bears the Phosphoserine; by CPK10 mark.

In terms of assembly, component of the glideosome complex composed of GAP50, GAP45, MTIP and MyoA; the complex is formed during the late schizont stage and in merozoites. MyoA, MTIP and GAP45 probably form an initial complex in the cytoplasm which is then recruited to the outer face of the inner membrane complex via the interaction with GAP50. Interacts with GAP50; the interaction is independent of GAP45 phosphorylation status and can also occur independently of the formation of the glideosome complex. In terms of processing, phosphorylated at multiple sites. Phosphorylation increases during the schizont stage and peaks in segmented merozoites. May be phosphorylated by PKB. In schizonts, phosphorylated at Ser-89 and Ser-149 in response to phospholipase C-mediated calcium release. Phosphorylation at Ser-149 begins in early schizonts while phosphorylation at Ser-103 begins in late schizonts. Phosphorylation at Ser-89, Ser-103 and Ser-149 appears to be dispensable for GAP45 inner membrane complex localization or GAP45 inclusion in the glideosome complex. Phosphorylation is not required for interaction with GAP50; however, it may regulate the interaction with MTIP and MyoA. N-myristoylated by NMT. N-myristoylation may contribute to the targeting of GAP45 to the inner membrane complex with the subsequent palmitoylation strengthening the interaction with the membrane. Post-translationally, palmitoylated. Palmitoylation appears to follow N-myristoylation and may strengthen the interaction with the inner membrane complex.

It localises to the inner membrane complex. Its function is as follows. Component of the glideosome complex, an inner membrane complex structure involved in parasite gliding motility and host cell invasion. During the asexual blood stage, required in schizonts to recruit MTIP and MyoA to the inner membrane complex where they assemble with GAP50 to form the glideosome complex. By regulating the formation of the glideosome, plays an essential role during merozoite invasion of host erythrocytes. This is Glideosome-associated protein 45 from Plasmodium falciparum (isolate 3D7).